The chain runs to 295 residues: Small ribosomal subunit protein uS2 (295 aa).

Residue serine 2 is modified to N-acetylserine. Serine 43 bears the Phosphoserine mark. The residue at position 52 (lysine 52) is an N6-acetyllysine. The segment at 54 to 113 (TWEKLLLAARAIVAIENPADVSVISSRNTGQRAVLKFAAATGATPIAGRFTPGTFTNQIQ) is interaction with PPP1R16B. The residue at position 89 (lysine 89) is an N6-acetyllysine; alternate. Lysine 89 is covalently cross-linked (Glycyl lysine isopeptide (Lys-Gly) (interchain with G-Cter in SUMO2); alternate). Threonine 97 bears the Phosphothreonine mark. Laminin-binding stretches follow at residues 161-180 (IPCNNKGAHSVGLMWWMLAR) and 205-229 (RDPEEIEKEEQAAAEKAVTKEEFQG). [DE]-W-[ST] repeat units follow at residues 230–232 (EWT), 247–249 (DWS), 266–268 (DWS), 275–277 (DWS), and 293–295 (EWS). Residues 242–295 (QPEVADWSEGVQVPSVPIQQFPTEDWSAQPSTEDWSAAPTAQATEWVGTTTEWS) form a laminin-binding region. The tract at residues 266–295 (DWSAQPSTEDWSAAPTAQATEWVGTTTEWS) is disordered.

The protein belongs to the universal ribosomal protein uS2 family. As to quaternary structure, monomer (37LRP) and homodimer (67LR). Component of the small ribosomal subunit. Mature ribosomes consist of a small (40S) and a large (60S) subunit. The 40S subunit contains about 33 different proteins and 1 molecule of RNA (18S). The 60S subunit contains about 49 different proteins and 3 molecules of RNA (28S, 5.8S and 5S). Interacts with RPS21. Interacts with several laminins including at least LAMB1. Interacts with MDK. The mature dimeric form interacts with PPP1R16B (via its fourth ankyrin repeat). Interacts with PPP1CA only in the presence of PPP1R16B. In terms of processing, acylated. Acylation may be a prerequisite for conversion of the monomeric 37 kDa laminin receptor precursor (37LRP) to the mature dimeric 67 kDa laminin receptor (67LR), and may provide a mechanism for membrane association. Cleaved by stromelysin-3 (ST3) at the cell surface. Cleavage by stromelysin-3 may be a mechanism to alter cell-extracellular matrix interactions.

It localises to the cell membrane. It is found in the cytoplasm. The protein resides in the nucleus. In terms of biological role, required for the assembly and/or stability of the 40S ribosomal subunit. Required for the processing of the 20S rRNA-precursor to mature 18S rRNA in a late step of the maturation of 40S ribosomal subunits. Also functions as a cell surface receptor for laminin. Plays a role in cell adhesion to the basement membrane and in the consequent activation of signaling transduction pathways. May play a role in cell fate determination and tissue morphogenesis. Also acts as a receptor for several other ligands, including the pathogenic prion protein, viruses, and bacteria. Acts as a PPP1R16B-dependent substrate of PPP1CA. The sequence is that of Small ribosomal subunit protein uS2 from Bos taurus (Bovine).